The following is a 2552-amino-acid chain: Protein TIC 214 (2552 aa).

A run of 6 helical transmembrane segments spans residues 15–35 (LIFG…SYLF), 54–74 (LSYG…YLPF), 78–98 (LSNF…QFFW), 119–136 (TLAF…YTFF), 154–174 (FKIL…LICI), and 243–263 (ILAT…PIPF). Residues 304-325 (EEQKKDEKSADEEKKRAVEEEN) are disordered. Over residues 305–322 (EQKKDEKSADEEKKRAVE) the composition is skewed to basic and acidic residues. Helical transmembrane passes span 362 to 382 (TLYT…AFLF), 423 to 443 (PFLV…SVYI), and 452 to 472 (FLFN…HFFF). The interval 2045 to 2077 (MKAEEQKKIDEEYEEKKEKRKKEQEEQGKAFDE) is disordered. A coiled-coil region spans residues 2416-2511 (RRRRQLRIVN…IKKKLMRLRF (96 aa)).

Belongs to the TIC214 family. Part of the Tic complex.

It is found in the plastid. It localises to the chloroplast inner membrane. In terms of biological role, involved in protein precursor import into chloroplasts. May be part of an intermediate translocation complex acting as a protein-conducting channel at the inner envelope. This Pelargonium hortorum (Common geranium) protein is Protein TIC 214.